The primary structure comprises 59 residues: Large ribosomal subunit protein uL30 (59 aa).

It belongs to the universal ribosomal protein uL30 family. As to quaternary structure, part of the 50S ribosomal subunit.

In Edwardsiella ictaluri (strain 93-146), this protein is Large ribosomal subunit protein uL30.